A 787-amino-acid polypeptide reads, in one-letter code: Serine/threonine-protein kinase PLK4 (787 aa).

The Protein kinase domain maps to 14–268 (YEVQHLLGKG…LEQVLRHPFM (255 aa)). ATP is bound by residues 20–28 (LGKGGFASV) and Lys43. The active-site Proton acceptor is the Asp139. The interval 311 to 336 (SNESRSSQRLRSIEKSAQSSSNPQML) is disordered. A Cryptic POLO box 1 (CPB1) domain is found at 386 to 505 (EQQMRVPPLN…ARFVGLVKSK (120 aa)). The Cryptic POLO box 2 (CPB2) domain maps to 506–613 (TPKITYFSSL…GRRPLTDVSH (108 aa)). The region spanning 675 to 755 (PIKRINIPDV…IPQVKLRLKC (81 aa)) is the POLO box domain.

It belongs to the protein kinase superfamily. Ser/Thr protein kinase family. CDC5/Polo subfamily. In terms of assembly, homodimer. Post-translationally, ubiquitinated by the SCF(Slimb) ubiquitin ligase complex; leading to its degradation by the proteasome during interphase and regulating centriole number and ensuring the block to centriole reduplication.

It is found in the cytoplasm. Its subcellular location is the cytoskeleton. The protein resides in the microtubule organizing center. It localises to the centrosome. The protein localises to the centriole. It catalyses the reaction L-seryl-[protein] + ATP = O-phospho-L-seryl-[protein] + ADP + H(+). The catalysed reaction is L-threonyl-[protein] + ATP = O-phospho-L-threonyl-[protein] + ADP + H(+). In terms of biological role, serine/threonine-protein kinase that plays a central role in centriole duplication. Able to trigger procentriole formation on the surface of the mother centriole cylinder, using mother centriole as a platform, leading to the recruitment of centriole biogenesis proteins such as sas-6. When overexpressed, it is able to induce centrosome amplification through the simultaneous generation of multiple procentrioles adjoining each parental centriole during S phase. Centrosome amplification following overexpression can initiate tumorigenesis, highlighting the importance of centrosome regulation in cancers. The chain is Serine/threonine-protein kinase PLK4 (SAK) from Drosophila willistoni (Fruit fly).